We begin with the raw amino-acid sequence, 247 residues long: Adenosylcobinamide-GDP ribazoletransferase (247 aa).

5 helical membrane passes run 34–54 (IVMF…IFIL), 59–79 (CGIP…TGGF), 113–133 (GGLA…ELAL), 138–158 (MLAA…LLMY), and 187–207 (LAVI…AMVV).

Belongs to the CobS family. Requires Mg(2+) as cofactor.

Its subcellular location is the cell inner membrane. The catalysed reaction is alpha-ribazole + adenosylcob(III)inamide-GDP = adenosylcob(III)alamin + GMP + H(+). The enzyme catalyses alpha-ribazole 5'-phosphate + adenosylcob(III)inamide-GDP = adenosylcob(III)alamin 5'-phosphate + GMP + H(+). It participates in cofactor biosynthesis; adenosylcobalamin biosynthesis; adenosylcobalamin from cob(II)yrinate a,c-diamide: step 7/7. Its function is as follows. Joins adenosylcobinamide-GDP and alpha-ribazole to generate adenosylcobalamin (Ado-cobalamin). Also synthesizes adenosylcobalamin 5'-phosphate from adenosylcobinamide-GDP and alpha-ribazole 5'-phosphate. The protein is Adenosylcobinamide-GDP ribazoletransferase of Salmonella choleraesuis (strain SC-B67).